The following is a 347-amino-acid chain: UDP-3-O-acylglucosamine N-acyltransferase (347 aa).

His245 serves as the catalytic Proton acceptor.

Belongs to the transferase hexapeptide repeat family. LpxD subfamily. As to quaternary structure, homotrimer.

The enzyme catalyses a UDP-3-O-[(3R)-3-hydroxyacyl]-alpha-D-glucosamine + a (3R)-hydroxyacyl-[ACP] = a UDP-2-N,3-O-bis[(3R)-3-hydroxyacyl]-alpha-D-glucosamine + holo-[ACP] + H(+). Its pathway is bacterial outer membrane biogenesis; LPS lipid A biosynthesis. In terms of biological role, catalyzes the N-acylation of UDP-3-O-acylglucosamine using 3-hydroxyacyl-ACP as the acyl donor. Is involved in the biosynthesis of lipid A, a phosphorylated glycolipid that anchors the lipopolysaccharide to the outer membrane of the cell. This Chromohalobacter salexigens (strain ATCC BAA-138 / DSM 3043 / CIP 106854 / NCIMB 13768 / 1H11) protein is UDP-3-O-acylglucosamine N-acyltransferase.